The sequence spans 696 residues: Polyribonucleotide nucleotidyltransferase (696 aa).

2 residues coordinate Mg(2+): Asp-483 and Asp-489. A KH domain is found at 550 to 609 (PRITTIWVKVDKIRDVIGSGGKNIRSVTEATGVSIDIDDTGKINIASTNKEACDLAIKMI). In terms of domain architecture, S1 motif spans 619–687 (GKLYMGTVKK…KQGKIKLSRK (69 aa)).

This sequence belongs to the polyribonucleotide nucleotidyltransferase family. Mg(2+) is required as a cofactor.

Its subcellular location is the cytoplasm. The enzyme catalyses RNA(n+1) + phosphate = RNA(n) + a ribonucleoside 5'-diphosphate. Involved in mRNA degradation. Catalyzes the phosphorolysis of single-stranded polyribonucleotides processively in the 3'- to 5'-direction. The chain is Polyribonucleotide nucleotidyltransferase from Geobacter sp. (strain M21).